The following is a 196-amino-acid chain: ATP-dependent Clp protease proteolytic subunit (196 aa).

The active-site Nucleophile is the S96. H121 is a catalytic residue.

The protein belongs to the peptidase S14 family. In terms of assembly, fourteen ClpP subunits assemble into 2 heptameric rings which stack back to back to give a disk-like structure with a central cavity, resembling the structure of eukaryotic proteasomes.

It is found in the cytoplasm. The enzyme catalyses Hydrolysis of proteins to small peptides in the presence of ATP and magnesium. alpha-casein is the usual test substrate. In the absence of ATP, only oligopeptides shorter than five residues are hydrolyzed (such as succinyl-Leu-Tyr-|-NHMec, and Leu-Tyr-Leu-|-Tyr-Trp, in which cleavage of the -Tyr-|-Leu- and -Tyr-|-Trp bonds also occurs).. Cleaves peptides in various proteins in a process that requires ATP hydrolysis. Has a chymotrypsin-like activity. Plays a major role in the degradation of misfolded proteins. This chain is ATP-dependent Clp protease proteolytic subunit, found in Streptococcus salivarius.